A 257-amino-acid polypeptide reads, in one-letter code: Imidazole glycerol phosphate synthase subunit HisF (257 aa).

Catalysis depends on residues Asp-11 and Asp-130.

The protein belongs to the HisA/HisF family. As to quaternary structure, heterodimer of HisH and HisF.

The protein resides in the cytoplasm. It catalyses the reaction 5-[(5-phospho-1-deoxy-D-ribulos-1-ylimino)methylamino]-1-(5-phospho-beta-D-ribosyl)imidazole-4-carboxamide + L-glutamine = D-erythro-1-(imidazol-4-yl)glycerol 3-phosphate + 5-amino-1-(5-phospho-beta-D-ribosyl)imidazole-4-carboxamide + L-glutamate + H(+). It functions in the pathway amino-acid biosynthesis; L-histidine biosynthesis; L-histidine from 5-phospho-alpha-D-ribose 1-diphosphate: step 5/9. Functionally, IGPS catalyzes the conversion of PRFAR and glutamine to IGP, AICAR and glutamate. The HisF subunit catalyzes the cyclization activity that produces IGP and AICAR from PRFAR using the ammonia provided by the HisH subunit. This chain is Imidazole glycerol phosphate synthase subunit HisF, found in Shewanella frigidimarina (strain NCIMB 400).